The sequence spans 182 residues: Dual-action ribosomal maturation protein DarP (182 aa).

This sequence belongs to the DarP family.

The protein localises to the cytoplasm. In terms of biological role, member of a network of 50S ribosomal subunit biogenesis factors which assembles along the 30S-50S interface, preventing incorrect 23S rRNA structures from forming. Promotes peptidyl transferase center (PTC) maturation. The protein is Dual-action ribosomal maturation protein DarP of Yersinia pestis.